Here is a 611-residue protein sequence, read N- to C-terminus: MIRQFSAGSSFTARHACEICRQRKVRCDRALPRCRRCERLNQACVYSPISQRRTRDEQLQELQERLAKTEAQLALDAPRGPASSMSSQSRSDSAAPAASRVPSVSASVPNSAATNPMDMVGTRSSNTSMDLPVNTSPMLDIDLFTAGADSNMALDWNPYLTALEPLDNLLPNRLSPRSLPQNGREEDISLAELNALHNYYFESVYFSFPFLNRDRFAGESTGNGPAINALIYSVALAGCTHSSPQHTKVSIYYTLARNYAEKCERDGQLNDLNFLQALLFIGRFEAMEGKVESSWMTLGRAAMLARLLRLPQMDRLEESTESQDGSGLSLLETTDPALLEERRRTFWALYILQSYIKTRTGWQCMLGDIKTFQINLPSPGLLRSDLTPLKMPFISEIGTEPCPEVSSYAGCVLMVDLALRCLDHAQGHGATNFWDGYCALVKNTDELFGMLKQHLNATSIRKDPVAFSLYLNLRATEIFSHESAIARSKEQGLPPLMTAESQRRATAAAFQISTAVRLNLPSPWKVDSDIIMLQAIFIAWPLAMALKAFYRELEHGGSRDSVNGVVTSSRLLFAALGHIEESGGHWHQSVAHVEAKLQELDEKNGFNSLAL.

Residues Cys-17–Cys-44 constitute a DNA-binding region (zn(2)-C6 fungal-type). Residues Asp-76–Ser-125 form a disordered region. Residues Pro-78 to Ala-113 are compositionally biased toward low complexity.

It localises to the nucleus. Functionally, transcription factor that positively regulates the expression of the gene cluster that mediates the biosynthesis of depudecin, a highly oxidized eleven-carbon linear polyketide that acts as a histone deacetylase (HDAC) inhibitor and makes a small contribution to pathogenesis. This is Depudecin biosynthesis cluster-specific transcription activator DEP6 from Fusarium langsethiae.